A 114-amino-acid polypeptide reads, in one-letter code: U17-barytoxin-Tl1d (114 aa).

A signal peptide spans 1–20 (MKTIIVFLSLLVLATKFGDA). A propeptide spanning residues 21–74 (NEGVNQEQMKEVIQNEFREDFLNEMAPMSLLQQLEAIESTLLEKEADRNSRQKR) is cleaved from the precursor. Intrachain disulfides connect cysteine 75–cysteine 88, cysteine 82–cysteine 93, and cysteine 87–cysteine 108.

The protein belongs to the neurotoxin 14 (magi-1) family. 03 (ICK-30-40) subfamily. As to expression, expressed by the venom gland.

It localises to the secreted. Its function is as follows. Ion channel inhibitor. The polypeptide is U17-barytoxin-Tl1d (Trittame loki (Brush-footed trapdoor spider)).